The following is a 151-amino-acid chain: MHALQAKILDPRLGSEFPLPQYATPGSAGLDLRALLKEDTVLEPGQTLLIPTGLSIYIGDPGLAAMILPRSGLGHKHGIVLGNLVGLIDSDYQGELMVSCWNRGNTPFTIAVGERIAQLVLVPVVQAHFEVVEAFDESQRGTGGFGHSGSH.

Substrate contacts are provided by residues 70–72 (RSG), Asn83, 87–89 (LID), and Met97.

Belongs to the dUTPase family. Requires Mg(2+) as cofactor.

The catalysed reaction is dUTP + H2O = dUMP + diphosphate + H(+). It participates in pyrimidine metabolism; dUMP biosynthesis; dUMP from dCTP (dUTP route): step 2/2. Functionally, this enzyme is involved in nucleotide metabolism: it produces dUMP, the immediate precursor of thymidine nucleotides and it decreases the intracellular concentration of dUTP so that uracil cannot be incorporated into DNA. This Pseudomonas putida (strain W619) protein is Deoxyuridine 5'-triphosphate nucleotidohydrolase.